A 120-amino-acid chain; its full sequence is Large ribosomal subunit protein bL17 (120 aa).

The protein belongs to the bacterial ribosomal protein bL17 family. As to quaternary structure, part of the 50S ribosomal subunit. Contacts protein L32.

The polypeptide is Large ribosomal subunit protein bL17 (Bacillus cereus (strain ATCC 14579 / DSM 31 / CCUG 7414 / JCM 2152 / NBRC 15305 / NCIMB 9373 / NCTC 2599 / NRRL B-3711)).